We begin with the raw amino-acid sequence, 196 residues long: Proteasome subunit beta 1 (196 aa).

Positions 1–6 (MEKKTG) are cleaved as a propeptide — removed in mature form; by autocatalysis. Threonine 7 serves as the catalytic Nucleophile.

It belongs to the peptidase T1B family. In terms of assembly, the 20S proteasome core is composed of 14 alpha and 14 beta subunits that assemble into four stacked heptameric rings, resulting in a barrel-shaped structure. The two inner rings, each composed of seven catalytic beta subunits, are sandwiched by two outer rings, each composed of seven alpha subunits. The catalytic chamber with the active sites is on the inside of the barrel. Has a gated structure, the ends of the cylinder being occluded by the N-termini of the alpha-subunits. Is capped at one or both ends by the proteasome regulatory ATPase, PAN.

It localises to the cytoplasm. It catalyses the reaction Cleavage of peptide bonds with very broad specificity.. The formation of the proteasomal ATPase PAN-20S proteasome complex, via the docking of the C-termini of PAN into the intersubunit pockets in the alpha-rings, triggers opening of the gate for substrate entry. Interconversion between the open-gate and close-gate conformations leads to a dynamic regulation of the 20S proteasome proteolysis activity. Its function is as follows. Component of the proteasome core, a large protease complex with broad specificity involved in protein degradation. This Pyrococcus furiosus (strain ATCC 43587 / DSM 3638 / JCM 8422 / Vc1) protein is Proteasome subunit beta 1.